Here is a 513-residue protein sequence, read N- to C-terminus: ATP synthase subunit alpha (513 aa).

169–176 (GDRQTGKT) serves as a coordination point for ATP.

Belongs to the ATPase alpha/beta chains family. F-type ATPases have 2 components, CF(1) - the catalytic core - and CF(0) - the membrane proton channel. CF(1) has five subunits: alpha(3), beta(3), gamma(1), delta(1), epsilon(1). CF(0) has three main subunits: a(1), b(2) and c(9-12). The alpha and beta chains form an alternating ring which encloses part of the gamma chain. CF(1) is attached to CF(0) by a central stalk formed by the gamma and epsilon chains, while a peripheral stalk is formed by the delta and b chains.

Its subcellular location is the cell inner membrane. The enzyme catalyses ATP + H2O + 4 H(+)(in) = ADP + phosphate + 5 H(+)(out). Produces ATP from ADP in the presence of a proton gradient across the membrane. The alpha chain is a regulatory subunit. This chain is ATP synthase subunit alpha, found in Actinobacillus succinogenes (strain ATCC 55618 / DSM 22257 / CCUG 43843 / 130Z).